The primary structure comprises 466 residues: tRNA-2-methylthio-N(6)-dimethylallyladenosine synthase (466 aa).

An MTTase N-terminal domain is found at 22–139; the sequence is RRYYVWTVGC…VVALAPNPIY (118 aa). 6 residues coordinate [4Fe-4S] cluster: Cys-31, Cys-67, Cys-101, Cys-166, Cys-170, and Cys-173. Residues 152-386 enclose the Radical SAM core domain; sequence SHPPVSVHVP…EQLQEQIATE (235 aa). In terms of domain architecture, TRAM spans 389 to 449; that stretch reads ARFLGQTVEV…PWSLQGVPQL (61 aa).

It belongs to the methylthiotransferase family. MiaB subfamily. Monomer. It depends on [4Fe-4S] cluster as a cofactor.

The protein localises to the cytoplasm. It carries out the reaction N(6)-dimethylallyladenosine(37) in tRNA + (sulfur carrier)-SH + AH2 + 2 S-adenosyl-L-methionine = 2-methylsulfanyl-N(6)-dimethylallyladenosine(37) in tRNA + (sulfur carrier)-H + 5'-deoxyadenosine + L-methionine + A + S-adenosyl-L-homocysteine + 2 H(+). In terms of biological role, catalyzes the methylthiolation of N6-(dimethylallyl)adenosine (i(6)A), leading to the formation of 2-methylthio-N6-(dimethylallyl)adenosine (ms(2)i(6)A) at position 37 in tRNAs that read codons beginning with uridine. The sequence is that of tRNA-2-methylthio-N(6)-dimethylallyladenosine synthase from Chloroflexus aurantiacus (strain ATCC 29366 / DSM 635 / J-10-fl).